Reading from the N-terminus, the 231-residue chain is Chromosome partition protein MukE (231 aa).

The segment at 197 to 231 is disordered; sequence RDGEAMPIEGGLSLDDSENDETSDNSAEGTGDEQP.

Belongs to the MukE family. Interacts, and probably forms a ternary complex, with MukF and MukB. The complex formation is stimulated by calcium or magnesium.

It is found in the cytoplasm. Its subcellular location is the nucleoid. Functionally, involved in chromosome condensation, segregation and cell cycle progression. May participate in facilitating chromosome segregation by condensation DNA from both sides of a centrally located replisome during cell division. Probably acts via its interaction with MukB and MukF. The protein is Chromosome partition protein MukE of Photorhabdus laumondii subsp. laumondii (strain DSM 15139 / CIP 105565 / TT01) (Photorhabdus luminescens subsp. laumondii).